Here is a 406-residue protein sequence, read N- to C-terminus: Probable UDP-arabinose 4-epimerase 3 (406 aa).

At 1 to 26 the chain is on the cytoplasmic side; it reads MIPLNRRASQTRGGMEYFDARRKPHN. The helical; Signal-anchor for type II membrane protein transmembrane segment at 27–44 threads the bilayer; it reads VGKVIAALVLTTLCIFIL. Residues 45-406 are Lumenal-facing; it reads KQSPGFGGSS…KSHPRGYGSN (362 aa). 65–96 contacts NAD(+); it reads HVLVTGGAGYIGSHASLRLLKDNYRVTIVDNL. The active-site Proton acceptor is tyrosine 213.

The protein belongs to the NAD(P)-dependent epimerase/dehydratase family. Requires NAD(+) as cofactor.

It localises to the golgi apparatus. The protein localises to the golgi stack membrane. It catalyses the reaction UDP-beta-L-arabinopyranose = UDP-alpha-D-xylose. Its pathway is nucleotide-sugar biosynthesis; UDP-L-arabinose biosynthesis; UDP-L-arabinose from UDP-alpha-D-xylose: step 1/1. It functions in the pathway cell wall biogenesis; cell wall polysaccharide biosynthesis. The sequence is that of Probable UDP-arabinose 4-epimerase 3 (UEL-3) from Oryza sativa subsp. japonica (Rice).